We begin with the raw amino-acid sequence, 100 residues long: Nucleoid-associated protein Rcas_2292 (100 aa).

Belongs to the YbaB/EbfC family. As to quaternary structure, homodimer.

The protein localises to the cytoplasm. Its subcellular location is the nucleoid. Functionally, binds to DNA and alters its conformation. May be involved in regulation of gene expression, nucleoid organization and DNA protection. This is Nucleoid-associated protein Rcas_2292 from Roseiflexus castenholzii (strain DSM 13941 / HLO8).